The primary structure comprises 155 residues: MSKVLEQVEAIVAPITDELQLELVDIAFEKEGPNWFLRIFIDKDGGVDIDECAAVSEKVSEKMDENDPITQNYFLEVSSPGAERPLKKEQDFENAVSKYVHVTSYEPIDGRKMWEGTLVSYDGTTLVITITDKTRKITCEIPKDKVAKARLAIQF.

It belongs to the RimP family.

It is found in the cytoplasm. Required for maturation of 30S ribosomal subunits. This is Ribosome maturation factor RimP from Listeria monocytogenes serovar 1/2a (strain ATCC BAA-679 / EGD-e).